The chain runs to 356 residues: Phosphate acyltransferase (356 aa).

Belongs to the PlsX family. In terms of assembly, homodimer. Probably interacts with PlsY.

The protein localises to the cytoplasm. It carries out the reaction a fatty acyl-[ACP] + phosphate = an acyl phosphate + holo-[ACP]. It participates in lipid metabolism; phospholipid metabolism. Catalyzes the reversible formation of acyl-phosphate (acyl-PO(4)) from acyl-[acyl-carrier-protein] (acyl-ACP). This enzyme utilizes acyl-ACP as fatty acyl donor, but not acyl-CoA. This is Phosphate acyltransferase from Shigella flexneri serotype 5b (strain 8401).